A 330-amino-acid chain; its full sequence is Flotillin-like protein FloA (330 aa).

The next 2 membrane-spanning stretches (helical) occupy residues 5-25 (FLPL…FYYV) and 27-47 (FLLW…QLFL).

This sequence belongs to the flotillin-like FloA family. In terms of assembly, homooligomerizes.

Its subcellular location is the cell membrane. It localises to the membrane raft. Found in functional membrane microdomains (FMM) that may be equivalent to eukaryotic membrane rafts. FMMs are highly dynamic and increase in number as cells age. Flotillins are thought to be important factors in membrane fluidity. This Parabacteroides distasonis (strain ATCC 8503 / DSM 20701 / CIP 104284 / JCM 5825 / NCTC 11152) protein is Flotillin-like protein FloA.